The primary structure comprises 158 residues: Putative peptidoglycan-binding-like protein (158 aa).

Residues 1–24 (MRSPKVKFLTIFTFCIFITKMSFA) form the signal peptide.

This sequence belongs to the IagB/IpgF/P19 family.

The protein localises to the periplasm. In Escherichia coli (strain K12), this protein is Putative peptidoglycan-binding-like protein (pbl).